The primary structure comprises 130 residues: Small ribosomal subunit protein uS11 (130 aa).

It belongs to the universal ribosomal protein uS11 family. As to quaternary structure, part of the 30S ribosomal subunit. Interacts with proteins S7 and S18. Binds to IF-3.

Functionally, located on the platform of the 30S subunit, it bridges several disparate RNA helices of the 16S rRNA. Forms part of the Shine-Dalgarno cleft in the 70S ribosome. The chain is Small ribosomal subunit protein uS11 from Alteromonas mediterranea (strain DSM 17117 / CIP 110805 / LMG 28347 / Deep ecotype).